Consider the following 449-residue polypeptide: NADH-quinone oxidoreductase subunit H (449 aa).

9 consecutive transmembrane segments (helical) span residues 29–49 (ILLK…FAIV), 96–116 (PIFI…FAVI), 136–156 (LPVS…GLIL), 177–197 (IISY…YAGT), 211–231 (WYIV…GETN), 259–279 (FFFL…TTLF), 298–318 (WVPL…FIWL), 330–350 (FMSF…LAVA), and 365–385 (WLVG…IDPG). A compositionally biased stretch (basic and acidic residues) spans 393-402 (LEEAEQRKLA). Residues 393 to 449 (LEEAEQRKLAEAPSLDRIPWPPPPQAAGRGRPAVSAGASANGSSTVIPADPGPRQER) form a disordered region. Residues 418–436 (AAGRGRPAVSAGASANGSS) show a composition bias toward low complexity.

It belongs to the complex I subunit 1 family. In terms of assembly, NDH-1 is composed of 14 different subunits. Subunits NuoA, H, J, K, L, M, N constitute the membrane sector of the complex.

The protein resides in the cell membrane. The enzyme catalyses a quinone + NADH + 5 H(+)(in) = a quinol + NAD(+) + 4 H(+)(out). NDH-1 shuttles electrons from NADH, via FMN and iron-sulfur (Fe-S) centers, to quinones in the respiratory chain. The immediate electron acceptor for the enzyme in this species is believed to be ubiquinone. Couples the redox reaction to proton translocation (for every two electrons transferred, four hydrogen ions are translocated across the cytoplasmic membrane), and thus conserves the redox energy in a proton gradient. This subunit may bind ubiquinone. This Frankia casuarinae (strain DSM 45818 / CECT 9043 / HFP020203 / CcI3) protein is NADH-quinone oxidoreductase subunit H.